A 220-amino-acid polypeptide reads, in one-letter code: MKAVVILSGGMDSSITAYMAKKDGYEIIAVHFNYGQRTEQKELEAFRAIAGELNAKTYEIDLPFFEQIGASALIDTNIAIPKQGIEPGIPVTYVPFRNGIFLSVAAAIAEKEGADSIYIGVVEEDSSGYPDCREDFIQKMESAINAGTKPETDIKIKTPLIHLRKEDIVQLGLSLGVPLEKTWSCYESEDEACGECDSCRLRLKGFEKAGAKDKIPYKST.

An ATP-binding site is contributed by 7 to 17 (LSGGMDSSITA). 4 residues coordinate Zn(2+): Cys185, Cys193, Cys196, and Cys199.

This sequence belongs to the QueC family. Zn(2+) is required as a cofactor.

It catalyses the reaction 7-carboxy-7-deazaguanine + NH4(+) + ATP = 7-cyano-7-deazaguanine + ADP + phosphate + H2O + H(+). The protein operates within purine metabolism; 7-cyano-7-deazaguanine biosynthesis. Catalyzes the ATP-dependent conversion of 7-carboxy-7-deazaguanine (CDG) to 7-cyano-7-deazaguanine (preQ(0)). The polypeptide is 7-cyano-7-deazaguanine synthase (Nitratiruptor sp. (strain SB155-2)).